Consider the following 1179-residue polypeptide: Integrin alpha-E (1179 aa).

The signal sequence occupies residues 1–18; it reads MWLFHTLLCIASLALLAA. Topologically, residues 19-1124 are extracellular; it reads FNVDVARPWL…VFLKDEKYHS (1106 aa). FG-GAP repeat units follow at residues 22–79 and 80–138; these read DVAR…EILC and HPVE…PQAQ. An N-linked (GlcNAc...) asparagine glycan is attached at N49. 2 disulfides stabilise this stretch: C70-C79 and C126-C159. The segment at 145 to 199 is X-domain (extra domain); that stretch reads ENLLDPDARVDTGDCYSNKEGGGEDDVNTARQRRALEKEEEEDKEEEEDEEEEEA. Positions 158–200 are disordered; the sequence is DCYSNKEGGGEDDVNTARQRRALEKEEEEDKEEEEDEEEEEAG. A compositionally biased stretch (acidic residues) spans 182 to 200; the sequence is KEEEEDKEEEEDEEEEEAG. The 190-residue stretch at 200-389 folds into the VWFA domain; sequence GTEIAIILDG…SKLRYNIISM (190 aa). N-linked (GlcNAc...) asparagine glycosylation is found at N271 and N321. One copy of the FG-GAP 3 repeat lies at 390–442; the sequence is EGTVGDALHYQLAQIGFSAQILDERQVLLGAVGAFDWSGGALLYDTRSRRGRF. N-linked (GlcNAc...) asparagine glycosylation is present at N444. FG-GAP repeat units lie at residues 447–499, 500–560, 563–627, and 631–691; these read AAAA…GREA, SFLP…DGSF, ARIL…GLSA, and QRIR…FTPS. Ca(2+)-binding residues include D522, D524, D526, D530, D586, S588, D590, D594, D654, S656, D658, and D662. An intrachain disulfide couples C706 to C762. Residues N726 and N782 are each glycosylated (N-linked (GlcNAc...) asparagine). Cysteines 823 and 829 form a disulfide. N857 is a glycosylation site (N-linked (GlcNAc...) asparagine). A disulfide bridge connects residues C893 and C907. 2 N-linked (GlcNAc...) asparagine glycosylation sites follow: N934 and N954. Cystine bridges form between C1008–C1033 and C1041–C1057. 2 N-linked (GlcNAc...) asparagine glycosylation sites follow: N1065 and N1096. A helical transmembrane segment spans residues 1125-1147; that stretch reads LPIIIKGSVGGLLVLIVILVILF. Over 1148–1179 the chain is Cytoplasmic; sequence KCGFFKRKYQQLNLESIRKAQLKSENLLEEEN. Positions 1150–1154 match the GFFKR motif motif; that stretch reads GFFKR.

The protein belongs to the integrin alpha chain family. Heterodimer of an alpha and a beta subunit. The alpha subunit is composed of a heavy and a light chains linked by a disulfide bond. Alpha-E associates with beta-7. In terms of tissue distribution, expressed on a subclass of T-lymphocytes known as intra-epithelial lymphocytes which are located between mucosal epithelial cells.

It localises to the membrane. Integrin alpha-E/beta-7 is a receptor for E-cadherin. It mediates adhesion of intra-epithelial T-lymphocytes to epithelial cell monolayers. The polypeptide is Integrin alpha-E (ITGAE) (Homo sapiens (Human)).